A 222-amino-acid polypeptide reads, in one-letter code: Cytochrome b6 (222 aa).

Residues 39 to 59 traverse the membrane as a helical segment; the sequence is IFYCLGGITLTCFIIQFATGF. Cys-42 provides a ligand contact to heme c. Positions 93 and 107 each coordinate heme b. Helical transmembrane passes span 97-117, 123-143, and 193-213; these read ASMM…TGGF, LTWI…VTGY, and LHTF…FLMI. Heme b-binding residues include His-194 and His-209.

This sequence belongs to the cytochrome b family. PetB subfamily. As to quaternary structure, the 4 large subunits of the cytochrome b6-f complex are cytochrome b6, subunit IV (17 kDa polypeptide, PetD), cytochrome f and the Rieske protein, while the 4 small subunits are PetG, PetL, PetM and PetN. The complex functions as a dimer. Heme b is required as a cofactor. The cofactor is heme c.

It localises to the cellular thylakoid membrane. In terms of biological role, component of the cytochrome b6-f complex, which mediates electron transfer between photosystem II (PSII) and photosystem I (PSI), cyclic electron flow around PSI, and state transitions. This is Cytochrome b6 (petB) from Picosynechococcus sp. (strain ATCC 27264 / PCC 7002 / PR-6) (Agmenellum quadruplicatum).